Consider the following 190-residue polypeptide: MNKDAYIQMFKDTNALLEGHFLLSSGKHSAKYLQCAKVLQYPNLAEMICSDLAQHFKDQQIDVVIGPALGAVTLSYELARQLNCRSIFAEREDGIMKLRRGFKIEEGEKVLVVEDVITTGGSVREIIEIVKEYRGEVVAVAGIVDRSGGKVDLGYPLKTLLTLEIETFEPEECPLCREGIPIVKPGSRKK.

Position 114–122 (114–122 (EDVITTGGS)) interacts with 5-phospho-alpha-D-ribose 1-diphosphate. Residues threonine 118 and arginine 146 each coordinate orotate.

The protein belongs to the purine/pyrimidine phosphoribosyltransferase family. PyrE subfamily. In terms of assembly, homodimer. Requires Mg(2+) as cofactor.

The catalysed reaction is orotidine 5'-phosphate + diphosphate = orotate + 5-phospho-alpha-D-ribose 1-diphosphate. The protein operates within pyrimidine metabolism; UMP biosynthesis via de novo pathway; UMP from orotate: step 1/2. In terms of biological role, catalyzes the transfer of a ribosyl phosphate group from 5-phosphoribose 1-diphosphate to orotate, leading to the formation of orotidine monophosphate (OMP). In Caldicellulosiruptor bescii (strain ATCC BAA-1888 / DSM 6725 / KCTC 15123 / Z-1320) (Anaerocellum thermophilum), this protein is Orotate phosphoribosyltransferase.